The chain runs to 344 residues: Tetraacyldisaccharide 4'-kinase (344 aa).

65-72 (HAGGTGKT) provides a ligand contact to ATP.

It belongs to the LpxK family.

It catalyses the reaction a lipid A disaccharide + ATP = a lipid IVA + ADP + H(+). It participates in glycolipid biosynthesis; lipid IV(A) biosynthesis; lipid IV(A) from (3R)-3-hydroxytetradecanoyl-[acyl-carrier-protein] and UDP-N-acetyl-alpha-D-glucosamine: step 6/6. Its function is as follows. Transfers the gamma-phosphate of ATP to the 4'-position of a tetraacyldisaccharide 1-phosphate intermediate (termed DS-1-P) to form tetraacyldisaccharide 1,4'-bis-phosphate (lipid IVA). The sequence is that of Tetraacyldisaccharide 4'-kinase from Neisseria meningitidis serogroup A / serotype 4A (strain DSM 15465 / Z2491).